The following is a 568-amino-acid chain: Sulfite reductase [NADPH] hemoprotein beta-component (568 aa).

The [4Fe-4S] cluster site is built by Cys425, Cys431, Cys470, and Cys474. Cys474 serves as a coordination point for siroheme.

It belongs to the nitrite and sulfite reductase 4Fe-4S domain family. Alpha(8)-beta(8). The alpha component is a flavoprotein, the beta component is a hemoprotein. It depends on siroheme as a cofactor. The cofactor is [4Fe-4S] cluster.

It carries out the reaction hydrogen sulfide + 3 NADP(+) + 3 H2O = sulfite + 3 NADPH + 4 H(+). It functions in the pathway sulfur metabolism; hydrogen sulfide biosynthesis; hydrogen sulfide from sulfite (NADPH route): step 1/1. Component of the sulfite reductase complex that catalyzes the 6-electron reduction of sulfite to sulfide. This is one of several activities required for the biosynthesis of L-cysteine from sulfate. This chain is Sulfite reductase [NADPH] hemoprotein beta-component, found in Xanthomonas campestris pv. campestris (strain ATCC 33913 / DSM 3586 / NCPPB 528 / LMG 568 / P 25).